A 62-amino-acid polypeptide reads, in one-letter code: Large ribosomal subunit protein bL32 (62 aa).

Residues 1 to 16 (MAVQKNRKTRSKRGMR) show a composition bias toward basic residues. Residues 1-62 (MAVQKNRKTR…VISQGDSDDE (62 aa)) are disordered. The segment covering 53 to 62 (VISQGDSDDE) has biased composition (polar residues).

This sequence belongs to the bacterial ribosomal protein bL32 family.

The polypeptide is Large ribosomal subunit protein bL32 (Alcanivorax borkumensis (strain ATCC 700651 / DSM 11573 / NCIMB 13689 / SK2)).